The following is a 118-amino-acid chain: Large ribosomal subunit protein bL19 (118 aa).

The protein belongs to the bacterial ribosomal protein bL19 family.

Functionally, this protein is located at the 30S-50S ribosomal subunit interface and may play a role in the structure and function of the aminoacyl-tRNA binding site. The protein is Large ribosomal subunit protein bL19 of Coprothermobacter proteolyticus (strain ATCC 35245 / DSM 5265 / OCM 4 / BT).